We begin with the raw amino-acid sequence, 338 residues long: Ketoreductase azaE (338 aa).

Positions 41 and 166 each coordinate NADP(+).

It belongs to the NAD(P)-dependent epimerase/dehydratase family. Dihydroflavonol-4-reductase subfamily.

It participates in secondary metabolite biosynthesis. In terms of biological role, ketoreductase; part of the gene cluster that mediates the biosynthesis of azaphilones, a class of fungal metabolites characterized by a highly oxygenated pyrano-quinone bicyclic core and exhibiting a broad range of bioactivities. In the first step, the non-reducing polyketide synthase azaA forms the hexaketide precursor from successive condensations of five malonyl-CoA units, presumably with a simple acetyl-CoA starter unit. The reactive polyketide chain then undergoes a PT-mediated C2-C7 cyclization to afford the aromatic ring and is eventually released as an aldehyde through the R-domain. The putative ketoreductase azaE is proposed to catalyze the reduction of the terminal ketone resulting in the early culture product FK17-P2a. The monooxygenase azaH was demonstrated to be the only enzyme required to convert FK17-P2a to azanigerone E. AzaH first hydroxylates the benzaldehyde intermediate FK17-P2a at C4, which triggers the formation of the pyran-ring to afford azanigerone E. In parallel, the 2,4-dimethylhexanoyl chain is synthesized by the HR-PKS azaB and is proposed to be transferred to the C4-hydroxyl of azanigerone E by the acyltransferase azaD directly from the ACP domain of azaB. Alternatively, the 2,4-dimethyl-hexanoyl chain may be offloaded from the HR-PKS as a carboxylic acid and converted to an acyl-CoA by azaF. The resulting acyl-CoA molecule could then be taken up as a substrate by AzaD to form azanigerone B. To yield the carboxylic acid substituent in azanigerone A, the hydroxypropyl side chain of azanigerone B would need to undergo a C-C oxidative cleavage catalyzed by cytochrome P450 AzaI. AzaI is proposed to act on a vicinal diol that leads to a C-C bond scission either through an alkoxyradical intermediate or a peroxy complex. In the biosynthesis of azanigerone A, azanigerone B first undergoes hydroxylation at C10, possibly catalyzed by one of the two FAD-dependent monooxygenases encoded in the cluster, azaG or azaL, resulting in the vicinal diol azanigerone C. Oxidative cleavage of azanigerone C by azaI would yield the corresponding aldehyde derivative of azanigerone A. Finally, the dehydrogenase azaJ is proposed to convert the aldehyde functional group into the carboxylic acid, completing the conversion from azanigerone B to azanigerone A. Alternatively, the oxidation of aldehyde to carboxylic acid may be catalyzed by the same P450 enzyme azaI via consecutive oxidation or by endogenous alcohol dehydrogenase. In Aspergillus niger (strain ATCC 1015 / CBS 113.46 / FGSC A1144 / LSHB Ac4 / NCTC 3858a / NRRL 328 / USDA 3528.7), this protein is Ketoreductase azaE.